The chain runs to 354 residues: Adenine deaminase (354 aa).

Zn(2+)-binding residues include H20, H22, and H200. E203 (proton donor) is an active-site residue. Residue D281 coordinates Zn(2+). D282 contacts substrate.

Belongs to the metallo-dependent hydrolases superfamily. Adenosine and AMP deaminases family. Adenine deaminase type 2 subfamily. It depends on Zn(2+) as a cofactor.

It carries out the reaction adenine + H2O + H(+) = hypoxanthine + NH4(+). Functionally, catalyzes the hydrolytic deamination of adenine to hypoxanthine. Plays an important role in the purine salvage pathway and in nitrogen catabolism. This chain is Adenine deaminase, found in Cupriavidus metallidurans (strain ATCC 43123 / DSM 2839 / NBRC 102507 / CH34) (Ralstonia metallidurans).